Reading from the N-terminus, the 590-residue chain is Nuclear receptor subfamily 2 group C member 1 (590 aa).

The interval 1-166 (MATIEEIAHQ…RLQRCIAFGM (166 aa)) is required for interaction with KAT2B. The segment at residues 98–173 (FDLCVVCGDK…FGMKQDSVQC (76 aa)) is a DNA-binding region (nuclear receptor). 2 NR C4-type zinc fingers span residues 101-121 (CVVC…CEGC) and 137-156 (CRGS…CQYC). Phosphoserine occurs at positions 185 and 203. Phosphothreonine is present on T208. The residue at position 210 (T210) is a Phosphothreonine; by MAPK1. K238 participates in a covalent cross-link: Glycyl lysine isopeptide (Lys-Gly) (interchain with G-Cter in SUMO); alternate. K238 participates in a covalent cross-link: Glycyl lysine isopeptide (Lys-Gly) (interchain with G-Cter in SUMO2); alternate. In terms of domain architecture, NR LBD spans 333 to 577 (EGMEGSPHLI…SVIPHILKME (245 aa)). Residues S461 and S568 each carry the phosphoserine; by PKC modification. Residues 571–590 (PHILKMEPADYNSQIIGHSL) form a required for interaction with NRIP1 region. K575 is covalently cross-linked (Glycyl lysine isopeptide (Lys-Gly) (interchain with G-Cter in SUMO2)).

It belongs to the nuclear hormone receptor family. NR2 subfamily. In terms of assembly, homodimer. Heterodimer; with NR2C2 which is required for chromatin remodeling and for binding to promoter regions such as globin DR1 repeats. Interacts with ESR1; the interaction prevents homodimerization of ESR1 and suppresses its transcriptional activity and cell growth. Interacts with NRIP1 (via its LXXLL motifs); the interaction provides corepressor activity. Interacts with HDAC3 (via the DNA-binding domain); the interaction recruits phosphorylated NR2C1 to PML bodies for sumoylation. Interacts with HDAC4 (via the DNA-binding domain). Interacts with PIAS1; the interaction is required for sumoylation of NR2C1. Interacts with UBE2I; the interaction is required for sumoylation of NR2C1. Interacts with KAT2B; the interaction acts as a corepressor of gene expression. In terms of processing, sumoylation requires both PIAS1 and UBE2I. Sumoylation appears to dissociate NR2C1 from the PML nuclear bodies. Enhances the interaction with NRIP1 but inhibits interaction with KAT2B. In proliferating cells, stimulation by all-trans retinoic acid, activation of MAPK1-mediated phosphorylation and recruitment to PML bodies with subsequent sumoylation, suppresses OCT4 expression. Post-translationally, phosphorylated on several serine and threonine residues. Phosphorylation on Thr-210, stimulated by all-trans retinoic acid (atRA) mediates PML location and sumoylation in proliferating cells which then modulates its association with effector molecules, KAT2B and NRIP1. Phosphorylation on Ser-568 by PKC is important for protein stability and function as activator of RARB. In terms of tissue distribution, isoform 1 is highly expressed in the adlumenal compartment of the seminiferous tubule of adult testes (at protein level) and in the eyes of newborn animals. Weakly expressed in other adult organs including the seminal vesicle, prostate, ovary, adrenal gland, heart, thymus, placenta and brain. Expressed during embryonic stages in developing eyes, brain and cartilage primordia (at protein level). Also expressed in the developing spinal motor neurons and in the sympathetic-, parasympathetic- and sensory ganglia of the embryonic PNS. Expressed in the developing neural epithelia of the inner ear, nasal cavity, tongue and retina. At day 16.5, expressed in various tissues including kidney and intestine. In contrast, isoform 2 is widely expressed at a low level throughout the adult testis.

It localises to the nucleus. The protein localises to the PML body. Its function is as follows. Orphan nuclear receptor. Binds the IR7 element in the promoter of its own gene in an autoregulatory negative feedback mechanism. Primarily repressor of a broad range of genes including ESR1 and RARB. Together with NR2C2, forms the core of the DRED (direct repeat erythroid-definitive) complex that represses embryonic and fetal globin transcription. Binds to hormone response elements (HREs) consisting of two 5'-AGGTCA-3' half site direct repeat consensus sequences. Also activator of OCT4 gene expression. Plays a fundamental role in early embryogenesis and regulates embryonic stem cell proliferation and differentiation. Mediator of retinoic acid-regulated preadipocyte proliferation. The chain is Nuclear receptor subfamily 2 group C member 1 from Mus musculus (Mouse).